Reading from the N-terminus, the 341-residue chain is L-threonine 3-dehydrogenase (341 aa).

C38 provides a ligand contact to Zn(2+). Residues T40 and H43 each act as charge relay system in the active site. Zn(2+)-binding residues include H63, E64, C93, C96, C99, and C107. Residues I175, D195, R200, 262 to 264, and 286 to 287 each bind NAD(+); these read LGI and IY.

Belongs to the zinc-containing alcohol dehydrogenase family. Homotetramer. The cofactor is Zn(2+).

It is found in the cytoplasm. It carries out the reaction L-threonine + NAD(+) = (2S)-2-amino-3-oxobutanoate + NADH + H(+). It functions in the pathway amino-acid degradation; L-threonine degradation via oxydo-reductase pathway; glycine from L-threonine: step 1/2. Functionally, catalyzes the NAD(+)-dependent oxidation of L-threonine to 2-amino-3-ketobutyrate. The polypeptide is L-threonine 3-dehydrogenase (Chromobacterium violaceum (strain ATCC 12472 / DSM 30191 / JCM 1249 / CCUG 213 / NBRC 12614 / NCIMB 9131 / NCTC 9757 / MK)).